The primary structure comprises 158 residues: MGRFLLVTLSLLVVAFSLNGANNCCCPQDWLPKNGYCYKVFKDHKSWDDAEMFCRKLKPGCHLASLHSNADAFDFSEYITDYLTGHDHVWIGLRDTEKNYIWEWTDRSRTDFLPWKKDQPDHHNNDEFCVEIVSFTGYLQWNDDSCTALRPFLCQCKH.

A signal peptide spans 1–20 (MGRFLLVTLSLLVVAFSLNG). Disulfide bonds link C26/C37, C54/C154, and C129/C146. Positions 33–155 (KNGYCYKVFK…CTALRPFLCQ (123 aa)) constitute a C-type lectin domain. Q119, D121, E127, N142, and D143 together coordinate Ca(2+). Residues 119 to 121 (QPD) carry the Galactose-binding motif.

It belongs to the true venom lectin family. As to quaternary structure, homodimer; disulfide-linked. In terms of tissue distribution, expressed by the venom gland.

The protein localises to the secreted. In terms of biological role, galactose-binding lectin that binds to and agglutinates erythrocytes in a calcium-dependent manner. This Hoplocephalus stephensii (Stephens's banded snake) protein is C-type lectin galactose-binding isoform.